The following is a 215-amino-acid chain: Cytochrome b6 (215 aa).

The chain crosses the membrane as a helical span at residues 32–52 (IFYCLGGITLTCFLVQVATGF). Cysteine 35 contributes to the heme c binding site. Histidine 86 and histidine 100 together coordinate heme b. A run of 3 helical transmembrane segments spans residues 90–110 (ASMM…TGGF), 116–136 (LTWV…VTGY), and 186–206 (LHTF…FPMI). Residues histidine 187 and histidine 202 each contribute to the heme b site.

The protein belongs to the cytochrome b family. PetB subfamily. The 4 large subunits of the cytochrome b6-f complex are cytochrome b6, subunit IV (17 kDa polypeptide, PetD), cytochrome f and the Rieske protein, while the 4 small subunits are PetG, PetL, PetM and PetN. The complex functions as a dimer. Heme b serves as cofactor. It depends on heme c as a cofactor.

The protein resides in the plastid. It localises to the chloroplast thylakoid membrane. Functionally, component of the cytochrome b6-f complex, which mediates electron transfer between photosystem II (PSII) and photosystem I (PSI), cyclic electron flow around PSI, and state transitions. The polypeptide is Cytochrome b6 (Agrostis stolonifera (Creeping bentgrass)).